The primary structure comprises 122 residues: MIQQESRLRVADNSGAKELLCIRVLGGSKRRYGNIGDVIVATVKSATPGGVVKKGKVVKAVIVRSKQGVRRNDGSYISFDENAAVIIKDDKTPVGTRIFGPVARELRDNEFMKIVSLAPEVL.

The protein belongs to the universal ribosomal protein uL14 family. Part of the 50S ribosomal subunit. Forms a cluster with proteins L3 and L19. In the 70S ribosome, L14 and L19 interact and together make contacts with the 16S rRNA in bridges B5 and B8.

Its function is as follows. Binds to 23S rRNA. Forms part of two intersubunit bridges in the 70S ribosome. The protein is Large ribosomal subunit protein uL14 of Clostridioides difficile (strain 630) (Peptoclostridium difficile).